Here is a 198-residue protein sequence, read N- to C-terminus: 3-isopropylmalate dehydratase small subunit (198 aa).

This sequence belongs to the LeuD family. LeuD type 1 subfamily. In terms of assembly, heterodimer of LeuC and LeuD.

It carries out the reaction (2R,3S)-3-isopropylmalate = (2S)-2-isopropylmalate. It functions in the pathway amino-acid biosynthesis; L-leucine biosynthesis; L-leucine from 3-methyl-2-oxobutanoate: step 2/4. Functionally, catalyzes the isomerization between 2-isopropylmalate and 3-isopropylmalate, via the formation of 2-isopropylmaleate. The polypeptide is 3-isopropylmalate dehydratase small subunit (Colwellia psychrerythraea (strain 34H / ATCC BAA-681) (Vibrio psychroerythus)).